A 393-amino-acid chain; its full sequence is 4-hydroxyphenylpyruvate dioxygenase (393 aa).

Thr-2 is subject to N-acetylthreonine. VOC domains follow at residues His-18–Lys-149 and Ile-180–Lys-338. Position 132 is an N6-succinyllysine (Lys-132). His-183 contacts Fe cation. Phosphoserine occurs at positions 211, 226, and 250. Fe cation-binding residues include His-266 and Glu-349.

This sequence belongs to the 4HPPD family. In terms of assembly, homodimer. Requires Fe cation as cofactor.

It localises to the cytoplasm. The protein resides in the endoplasmic reticulum membrane. Its subcellular location is the golgi apparatus membrane. It catalyses the reaction 3-(4-hydroxyphenyl)pyruvate + O2 = homogentisate + CO2. The protein operates within amino-acid degradation; L-phenylalanine degradation; acetoacetate and fumarate from L-phenylalanine: step 3/6. In terms of biological role, catalyzes the conversion of 4-hydroxyphenylpyruvic acid to homogentisic acid, one of the steps in tyrosine catabolism. This Bos taurus (Bovine) protein is 4-hydroxyphenylpyruvate dioxygenase (HPD).